Consider the following 101-residue polypeptide: Integration host factor subunit alpha (101 aa).

Belongs to the bacterial histone-like protein family. Heterodimer of an alpha and a beta chain.

This protein is one of the two subunits of integration host factor, a specific DNA-binding protein that functions in genetic recombination as well as in transcriptional and translational control. The polypeptide is Integration host factor subunit alpha (Dinoroseobacter shibae (strain DSM 16493 / NCIMB 14021 / DFL 12)).